Consider the following 152-residue polypeptide: Small ribosomal subunit protein uS19z (152 aa).

The protein belongs to the universal ribosomal protein uS19 family.

The protein resides in the cytoplasm. The protein is Small ribosomal subunit protein uS19z (RPS15B) of Arabidopsis thaliana (Mouse-ear cress).